A 133-amino-acid chain; its full sequence is Ribosome-binding factor A (133 aa).

Belongs to the RbfA family. As to quaternary structure, monomer. Binds 30S ribosomal subunits, but not 50S ribosomal subunits or 70S ribosomes.

It localises to the cytoplasm. Functionally, one of several proteins that assist in the late maturation steps of the functional core of the 30S ribosomal subunit. Associates with free 30S ribosomal subunits (but not with 30S subunits that are part of 70S ribosomes or polysomes). Required for efficient processing of 16S rRNA. May interact with the 5'-terminal helix region of 16S rRNA. The protein is Ribosome-binding factor A of Enterobacter sp. (strain 638).